Here is a 172-residue protein sequence, read N- to C-terminus: Small ribosomal subunit protein uS5 (172 aa).

The 64-residue stretch at leucine 13–valine 76 folds into the S5 DRBM domain.

It belongs to the universal ribosomal protein uS5 family. Part of the 30S ribosomal subunit. Contacts proteins S4 and S8.

In terms of biological role, with S4 and S12 plays an important role in translational accuracy. Located at the back of the 30S subunit body where it stabilizes the conformation of the head with respect to the body. The polypeptide is Small ribosomal subunit protein uS5 (Neisseria gonorrhoeae (strain ATCC 700825 / FA 1090)).